A 387-amino-acid chain; its full sequence is Succinate--CoA ligase [ADP-forming] subunit beta (387 aa).

Residues Lys-46, 53-55 (GRG), Glu-99, Ala-102, and Glu-107 contribute to the ATP site. Residues Asn-199 and Asp-213 each contribute to the Mg(2+) site. Substrate contacts are provided by residues Asn-264 and 321–323 (GIV).

This sequence belongs to the succinate/malate CoA ligase beta subunit family. In terms of assembly, heterotetramer of two alpha and two beta subunits. Mg(2+) serves as cofactor.

The enzyme catalyses succinate + ATP + CoA = succinyl-CoA + ADP + phosphate. The catalysed reaction is GTP + succinate + CoA = succinyl-CoA + GDP + phosphate. It functions in the pathway carbohydrate metabolism; tricarboxylic acid cycle; succinate from succinyl-CoA (ligase route): step 1/1. Its function is as follows. Succinyl-CoA synthetase functions in the citric acid cycle (TCA), coupling the hydrolysis of succinyl-CoA to the synthesis of either ATP or GTP and thus represents the only step of substrate-level phosphorylation in the TCA. The beta subunit provides nucleotide specificity of the enzyme and binds the substrate succinate, while the binding sites for coenzyme A and phosphate are found in the alpha subunit. This chain is Succinate--CoA ligase [ADP-forming] subunit beta, found in Campylobacter jejuni subsp. jejuni serotype O:23/36 (strain 81-176).